Consider the following 155-residue polypeptide: Probable calcium-binding protein CML9 (155 aa).

EF-hand domains follow at residues 8–43 (EQVDECREIFDLFDSDEDGRIAAGELVTALRSLGQN), 86–121 (ATEKELAACLDVFDDARSGVIPAEQLRQAMVSHGDR), and 122–155 (LTEEEADEMVRKADPAGEGRVEYKEFVKVLMNNK). Ca(2+) is bound by residues Asp-21, Asp-23, Asp-25, Arg-27, and Glu-32.

Functionally, potential calcium sensor. In Oryza sativa subsp. japonica (Rice), this protein is Probable calcium-binding protein CML9 (CML9).